Consider the following 152-residue polypeptide: Snaclec agkisacutacin subunit A (152 aa).

A signal peptide spans 1-23 (MGRFIFVSFGLLVVFLSLSGTAA). The 129-residue stretch at 24–152 (DCSSGWSSYE…EQQDPFVCEA (129 aa)) folds into the C-type lectin domain. Intrachain disulfides connect C25-C36, C53-C150, and C125-C142. Ca(2+) is bound by residues S64, E66, and E70. E151 contacts Ca(2+).

It belongs to the snaclec family. Heterodimer with subunit B of AaACP or agkisacutacin; disulfide-linked. Expressed by the venom gland.

It localises to the secreted. Its function is as follows. Anticoagulant protein which binds to the gamma-carboxyglutamic acid-domain regions of factors IX (F9) and factor X (F10) in the presence of calcium with a 1 to 1 stoichiometry. Also inhibits platelet aggregation by binding to platelet glycoprotein Ibalpha (GP1BA) and functioning as a blocker of von Willebrand factor (VWF). Is devoid of hemorrhagic and lethal activities. Possesses antithrombotic and thrombolytic activities. Also hydrolyzes the Aalpha-chain of fibrinogen (FGA). Does not affect the Bbeta-chain (FGB) and the gamma chain (FGG). This Deinagkistrodon acutus (Hundred-pace snake) protein is Snaclec agkisacutacin subunit A.